Consider the following 405-residue polypeptide: Probable dual-specificity RNA methyltransferase RlmN (405 aa).

The segment covering 1–15 (MSSTGSSVSTSGLVL) has biased composition (low complexity). Residues 1–34 (MSSTGSSVSTSGLVLPSTPLAEPGKEVPLVVNTP) are disordered. The active-site Proton acceptor is Glu130. The Radical SAM core domain maps to 142 to 386 (SAARATLCLS…VTVRDTRGSE (245 aa)). Cys149 and Cys391 are joined by a disulfide. Residues Cys156, Cys160, and Cys163 each coordinate [4Fe-4S] cluster. Residues 211–212 (GE), Ser245, 268–270 (SLH), and Asn348 each bind S-adenosyl-L-methionine. Catalysis depends on Cys391, which acts as the S-methylcysteine intermediate.

Belongs to the radical SAM superfamily. RlmN family. Requires [4Fe-4S] cluster as cofactor.

It localises to the cytoplasm. The catalysed reaction is adenosine(2503) in 23S rRNA + 2 reduced [2Fe-2S]-[ferredoxin] + 2 S-adenosyl-L-methionine = 2-methyladenosine(2503) in 23S rRNA + 5'-deoxyadenosine + L-methionine + 2 oxidized [2Fe-2S]-[ferredoxin] + S-adenosyl-L-homocysteine. It carries out the reaction adenosine(37) in tRNA + 2 reduced [2Fe-2S]-[ferredoxin] + 2 S-adenosyl-L-methionine = 2-methyladenosine(37) in tRNA + 5'-deoxyadenosine + L-methionine + 2 oxidized [2Fe-2S]-[ferredoxin] + S-adenosyl-L-homocysteine. In terms of biological role, specifically methylates position 2 of adenine 2503 in 23S rRNA and position 2 of adenine 37 in tRNAs. The polypeptide is Probable dual-specificity RNA methyltransferase RlmN (Cutibacterium acnes (strain DSM 16379 / KPA171202) (Propionibacterium acnes)).